A 280-amino-acid polypeptide reads, in one-letter code: 2,3,4,5-tetrahydropyridine-2,6-dicarboxylate N-succinyltransferase (280 aa).

The substrate site is built by arginine 107 and aspartate 144.

Belongs to the transferase hexapeptide repeat family. As to quaternary structure, homotrimer.

It is found in the cytoplasm. It carries out the reaction (S)-2,3,4,5-tetrahydrodipicolinate + succinyl-CoA + H2O = (S)-2-succinylamino-6-oxoheptanedioate + CoA. Its pathway is amino-acid biosynthesis; L-lysine biosynthesis via DAP pathway; LL-2,6-diaminopimelate from (S)-tetrahydrodipicolinate (succinylase route): step 1/3. The chain is 2,3,4,5-tetrahydropyridine-2,6-dicarboxylate N-succinyltransferase from Paramagnetospirillum magneticum (strain ATCC 700264 / AMB-1) (Magnetospirillum magneticum).